We begin with the raw amino-acid sequence, 265 residues long: Homeobox protein engrailed-2-A (265 aa).

Composition is skewed to basic and acidic residues over residues 1–12 (MEENEQNNREVE) and 102–115 (GEKK…ETLK). Disordered stretches follow at residues 1 to 38 (MEEN…QPHH), 75 to 140 (LSGA…KATQ), and 156 to 181 (DRPS…RPRT). Positions 122–136 (DHSLSSDSDSSQTSS) are enriched in low complexity. Positions 176 to 235 (DKRPRTAFTADQLQRLKAEFQTNRYLTEQRRQSLAQELSLNESQIKIWFQNKRAKIKKAT) form a DNA-binding region, homeobox.

The protein belongs to the engrailed homeobox family.

Its subcellular location is the nucleus. The sequence is that of Homeobox protein engrailed-2-A (en2-a) from Xenopus laevis (African clawed frog).